The following is a 112-amino-acid chain: UPF0251 protein MA_4245 (112 aa).

Belongs to the UPF0251 family.

The sequence is that of UPF0251 protein MA_4245 from Methanosarcina acetivorans (strain ATCC 35395 / DSM 2834 / JCM 12185 / C2A).